The chain runs to 115 residues: Cholecystokinin (115 aa).

The signal sequence occupies residues 1-20 (MKSGVCLCVVMAVLAAGALA). A propeptide spanning residues 21-70 (QPVVPAEATDPVEQRAQEAPRRQLRAVLRTDGEPRARLGALLARYIQQVR) is cleaved from the precursor. Tyrosine 97 carries the sulfotyrosine modification. The residue at position 103 (phenylalanine 103) is a Phenylalanine amide. The propeptide occupies 107–115 (SAEDYEYPS). Residues tyrosine 111 and tyrosine 113 each carry the sulfotyrosine modification.

This sequence belongs to the gastrin/cholecystokinin family. Binds to CCK-A receptors in the pancreas and CCK-B receptors in the brain. The precursor is cleaved by proteases to produce a number of active cholecystokinins. In terms of tissue distribution, expressed and secreted by discrete enteroendocrine cells that reside as single cells scattered among enterocytes in the mucosa of the small intestine. Released into the blood following ingestion of a meal.

Its subcellular location is the secreted. Its function is as follows. This peptide hormone induces gall bladder contraction and the release of pancreatic enzymes in the gut. Its function in the brain is not clear. Binding to CCK-A receptors stimulates amylase release from the pancreas, binding to CCK-B receptors stimulates gastric acid secretion. This Mus musculus (Mouse) protein is Cholecystokinin (Cck).